A 609-amino-acid chain; its full sequence is UvrABC system protein C (609 aa).

Positions histidine 13–valine 91 constitute a GIY-YIG domain. The UVR domain maps to glutamine 201 to valine 236.

Belongs to the UvrC family. Interacts with UvrB in an incision complex.

The protein resides in the cytoplasm. In terms of biological role, the UvrABC repair system catalyzes the recognition and processing of DNA lesions. UvrC both incises the 5' and 3' sides of the lesion. The N-terminal half is responsible for the 3' incision and the C-terminal half is responsible for the 5' incision. The sequence is that of UvrABC system protein C from Histophilus somni (strain 2336) (Haemophilus somnus).